The following is a 507-amino-acid chain: Probable Xaa-Pro aminopeptidase HCBG_01484 (507 aa).

Residues Asp-283, Asp-294, Glu-431, and Glu-469 each contribute to the Mn(2+) site.

The protein belongs to the peptidase M24B family. The cofactor is Mn(2+).

It catalyses the reaction Release of any N-terminal amino acid, including proline, that is linked to proline, even from a dipeptide or tripeptide.. In terms of biological role, catalyzes the removal of a penultimate prolyl residue from the N-termini of peptides. This Ajellomyces capsulatus (strain G186AR / H82 / ATCC MYA-2454 / RMSCC 2432) (Darling's disease fungus) protein is Probable Xaa-Pro aminopeptidase HCBG_01484.